A 455-amino-acid chain; its full sequence is L-serine dehydratase (455 aa).

The protein belongs to the iron-sulfur dependent L-serine dehydratase family. [4Fe-4S] cluster is required as a cofactor.

The enzyme catalyses L-serine = pyruvate + NH4(+). It functions in the pathway carbohydrate biosynthesis; gluconeogenesis. The sequence is that of L-serine dehydratase (sdaA) from Haemophilus influenzae (strain ATCC 51907 / DSM 11121 / KW20 / Rd).